A 339-amino-acid polypeptide reads, in one-letter code: Putative methylthioribose-1-phosphate isomerase (339 aa).

Residues 43-45 (RGA), Arg-86, and Gln-191 contribute to the substrate site. The Proton donor role is filled by Asp-232. 241–242 (NK) is a substrate binding site.

This sequence belongs to the eIF-2B alpha/beta/delta subunits family. MtnA subfamily.

The catalysed reaction is 5-(methylsulfanyl)-alpha-D-ribose 1-phosphate = 5-(methylsulfanyl)-D-ribulose 1-phosphate. Its function is as follows. Catalyzes the interconversion of methylthioribose-1-phosphate (MTR-1-P) into methylthioribulose-1-phosphate (MTRu-1-P). The chain is Putative methylthioribose-1-phosphate isomerase from Archaeoglobus fulgidus (strain ATCC 49558 / DSM 4304 / JCM 9628 / NBRC 100126 / VC-16).